The following is a 94-amino-acid chain: Phosphoribosyl-ATP pyrophosphatase (94 aa).

This sequence belongs to the PRA-PH family.

The protein localises to the cytoplasm. The catalysed reaction is 1-(5-phospho-beta-D-ribosyl)-ATP + H2O = 1-(5-phospho-beta-D-ribosyl)-5'-AMP + diphosphate + H(+). Its pathway is amino-acid biosynthesis; L-histidine biosynthesis; L-histidine from 5-phospho-alpha-D-ribose 1-diphosphate: step 2/9. The chain is Phosphoribosyl-ATP pyrophosphatase (hisE) from Pyrobaculum aerophilum (strain ATCC 51768 / DSM 7523 / JCM 9630 / CIP 104966 / NBRC 100827 / IM2).